Here is a 335-residue protein sequence, read N- to C-terminus: Dolichyl-diphosphooligosaccharide--protein glycosyltransferase subunit MAGT1 (335 aa).

Positions 1–29 are cleaved as a signal peptide; that stretch reads MAAGWWFWCVSVTVAVALLIVCDVPSVSA. The Extracellular segment spans residues 30-184; sequence QRKKEMVLSE…DVNIRVIRPP (155 aa). A Thioredoxin domain is found at 47–175; it reads WTNKRPVIRM…IARWIADRTD (129 aa). Residue Asn-71 is glycosylated (N-linked (GlcNAc...) asparagine). The cysteines at positions 87 and 90 are disulfide-linked. Residues 185–205 form a helical membrane-spanning segment; sequence NYAGPLMLGLLLAVIGGLVYL. Over 206 to 209 the chain is Cytoplasmic; it reads RRSN. The chain crosses the membrane as a helical span at residues 210-230; that stretch reads MEFLFNKTGWAFAALCFVLAM. Residues 231 to 270 are Extracellular-facing; that stretch reads TSGQMWNHIRGPPYAHKNPHTGHVNYIHGSSQAQFVAETH. Residues 271–291 traverse the membrane as a helical segment; sequence IVLLFNGGVTLGMVLLCEAAT. The Cytoplasmic portion of the chain corresponds to 292 to 300; that stretch reads SDMDIGKRK. Residues 301 to 321 form a helical membrane-spanning segment; it reads IMCVAGIGLVVLFFSWMLSIF. The Extracellular portion of the chain corresponds to 322–335; sequence RSKYHGYPYSFLMS.

Belongs to the OST3/OST6 family. In terms of assembly, accessory component of the STT3B-containing form of the oligosaccharyltransferase (OST) complex. OST exists in two different complex forms which contain common core subunits RPN1, RPN2, OST48, OST4, DAD1 and TMEM258, either STT3A or STT3B as catalytic subunits, and form-specific accessory subunits. OST can form stable complexes with the Sec61 complex or with both the Sec61 and TRAP complexes. The association of TUSC3 or MAGT1 with the STT3B-containing complex seems to be mutually exclusvice.

It localises to the cell membrane. The protein localises to the endoplasmic reticulum. The protein resides in the endoplasmic reticulum membrane. It functions in the pathway protein modification; protein glycosylation. In terms of biological role, accessory component of the STT3B-containing form of the N-oligosaccharyl transferase (OST) complex which catalyzes the transfer of a high mannose oligosaccharide from a lipid-linked oligosaccharide donor to an asparagine residue within an Asn-X-Ser/Thr consensus motif in nascent polypeptide chains. Involved in N-glycosylation of STT3B-dependent substrates. Specifically required for the glycosylation of a subset of acceptor sites that are near cysteine residues; in this function seems to act redundantly with TUSC3. In its oxidized form proposed to form transient mixed disulfides with a glycoprotein substrate to facilitate access of STT3B to the unmodified acceptor site. Also has oxidoreductase-independent functions in the STT3B-containing OST complex possibly involving substrate recognition. Could indirectly play a role in Mg(2+) transport in epithelial cells. The chain is Dolichyl-diphosphooligosaccharide--protein glycosyltransferase subunit MAGT1 from Pongo abelii (Sumatran orangutan).